The following is a 446-amino-acid chain: Exodeoxyribonuclease 7 large subunit (446 aa).

It belongs to the XseA family. Heterooligomer composed of large and small subunits.

Its subcellular location is the cytoplasm. The enzyme catalyses Exonucleolytic cleavage in either 5'- to 3'- or 3'- to 5'-direction to yield nucleoside 5'-phosphates.. Functionally, bidirectionally degrades single-stranded DNA into large acid-insoluble oligonucleotides, which are then degraded further into small acid-soluble oligonucleotides. The chain is Exodeoxyribonuclease 7 large subunit from Streptococcus pneumoniae (strain Hungary19A-6).